We begin with the raw amino-acid sequence, 281 residues long: MDFFITNGTRLLEKELTAGSGQITYDVNKNIFGLPILKRRENQGNPTLFPTYDNYSHILSFIKSLSIPATYKTQVYTFAWTHSSVDPKNTIYTHLTTQIPAVKANSLGTASKVVQGPGHTGGDLIDFKDHFKITCQHSNFQQSYFIRIRYASNGSANTRAVINLSIPGVAELGMALNPTFSGTDYTNLKYKDFQYLEFSNEVKFAPNQNISLVFNRSDVYTNTTVLIDKIEFLPITRSIREDREKQKLETVQQIINTFYANPIKNTLQSELTDYDIDQAAN.

Antigenic epitope stretches follow at residues 54–78 (NYSHILSFIKSLSIPATYKTQVYTF), 91–104 (IYTHLTTQIPAVKA), 108–116 (GTASKVVQG), 131–148 (FKITCQHSNFQQSYFIRI), 160–172 (AVINLSIPGVAEL), 189–196 (KYKDFQYL), 208–216 (QNISLVFNR), 221–236 (TNTTVLIDKIEFLPIT), and 247–256 (KLETVQQIIN).

Belongs to the delta endotoxin family.

Functionally, promotes colloidosmotic lysis by binding to the midgut epithelial cells of insects. Active against Mamestra brassicae. The protein is Insecticidal crystal toxin protein of Bacillus thuringiensis subsp. kurstaki.